The primary structure comprises 211 residues: MSRKHLTARQQEIFDFLKHHIDTTGMPPTRVEIAREIGFKSPNAAEEHLKALARKGYIEMLSGTSRGIRILINNDNEDVTQDLSLPLIGKVAAGTPIMAIEHVESHYPVNGAMFNPNADYLLKVNGNSMEKIGILDGDLLAVHKTNFARNGQVVVARVEDEVTVKRLEKKGELIYLHPENDELQPIIVDPRLKYIEIEGIAVGVIRNNAWM.

Residues 30 to 50 (RVEIAREIGFKSPNAAEEHLK) constitute a DNA-binding region (H-T-H motif). Residues serine 128 and lysine 165 each act as for autocatalytic cleavage activity in the active site.

It belongs to the peptidase S24 family. Homodimer.

The catalysed reaction is Hydrolysis of Ala-|-Gly bond in repressor LexA.. Its function is as follows. Represses a number of genes involved in the response to DNA damage (SOS response), including recA and lexA. In the presence of single-stranded DNA, RecA interacts with LexA causing an autocatalytic cleavage which disrupts the DNA-binding part of LexA, leading to derepression of the SOS regulon and eventually DNA repair. The polypeptide is LexA repressor (Haemophilus ducreyi (strain 35000HP / ATCC 700724)).